A 371-amino-acid chain; its full sequence is Cytochrome b (371 aa).

4 consecutive transmembrane segments (helical) span residues 25 to 45, 69 to 90, 105 to 125, and 170 to 190; these read FGSM…FLAI, WTMQ…YIHI, WLSG…GYVL, and FFAL…AHIM. Positions 75 and 89 each coordinate heme b. Heme b-binding residues include histidine 174 and histidine 188. Histidine 193 serves as a coordination point for a ubiquinone. 4 helical membrane-spanning segments follow: residues 218-238, 280-300, 312-332, and 339-358; these read NKDM…LSFL, LGGT…PFTH, MTQT…WTAT, and FMFI…FMNP.

It belongs to the cytochrome b family. The cytochrome bc1 complex contains 3 respiratory subunits (MT-CYB, CYC1 and UQCRFS1), 2 core proteins (UQCRC1 and UQCRC2) and probably 6 low-molecular weight proteins. Heme b is required as a cofactor.

Its subcellular location is the mitochondrion inner membrane. In terms of biological role, component of the ubiquinol-cytochrome c reductase complex (complex III or cytochrome b-c1 complex) that is part of the mitochondrial respiratory chain. The b-c1 complex mediates electron transfer from ubiquinol to cytochrome c. Contributes to the generation of a proton gradient across the mitochondrial membrane that is then used for ATP synthesis. The protein is Cytochrome b (MT-CYB) of Elapsoidea nigra (Usambara garter snake).